The chain runs to 425 residues: Enolase (425 aa).

(2R)-2-phosphoglycerate is bound at residue glutamine 162. Glutamate 204 (proton donor) is an active-site residue. The Mg(2+) site is built by aspartate 241, glutamate 284, and aspartate 311. Residues lysine 336, arginine 365, serine 366, and lysine 387 each coordinate (2R)-2-phosphoglycerate. Residue lysine 336 is the Proton acceptor of the active site.

This sequence belongs to the enolase family. Mg(2+) serves as cofactor.

It is found in the cytoplasm. The protein resides in the secreted. It localises to the cell surface. The enzyme catalyses (2R)-2-phosphoglycerate = phosphoenolpyruvate + H2O. It functions in the pathway carbohydrate degradation; glycolysis; pyruvate from D-glyceraldehyde 3-phosphate: step 4/5. In terms of biological role, catalyzes the reversible conversion of 2-phosphoglycerate (2-PG) into phosphoenolpyruvate (PEP). It is essential for the degradation of carbohydrates via glycolysis. The sequence is that of Enolase from Brucella abortus (strain S19).